The chain runs to 193 residues: GTP cyclohydrolase 1 (193 aa).

Zn(2+) contacts are provided by Cys73, His76, and Cys144.

The protein belongs to the GTP cyclohydrolase I family. As to quaternary structure, homomer.

The catalysed reaction is GTP + H2O = 7,8-dihydroneopterin 3'-triphosphate + formate + H(+). It functions in the pathway cofactor biosynthesis; 7,8-dihydroneopterin triphosphate biosynthesis; 7,8-dihydroneopterin triphosphate from GTP: step 1/1. The polypeptide is GTP cyclohydrolase 1 (Hyperthermus butylicus (strain DSM 5456 / JCM 9403 / PLM1-5)).